Consider the following 84-residue polypeptide: UPF0298 protein NWMN_0985 (84 aa).

The protein belongs to the UPF0298 family.

The protein resides in the cytoplasm. The polypeptide is UPF0298 protein NWMN_0985 (Staphylococcus aureus (strain Newman)).